Consider the following 297-residue polypeptide: tRNA dimethylallyltransferase (297 aa).

Residue 10-17 (APTGAGKT) participates in ATP binding. 12–17 (TGAGKT) provides a ligand contact to substrate. Residues 34 to 37 (DSRQ) are interaction with substrate tRNA.

This sequence belongs to the IPP transferase family. Monomer. Requires Mg(2+) as cofactor.

The catalysed reaction is adenosine(37) in tRNA + dimethylallyl diphosphate = N(6)-dimethylallyladenosine(37) in tRNA + diphosphate. Functionally, catalyzes the transfer of a dimethylallyl group onto the adenine at position 37 in tRNAs that read codons beginning with uridine, leading to the formation of N6-(dimethylallyl)adenosine (i(6)A). This Leptospira interrogans serogroup Icterohaemorrhagiae serovar Lai (strain 56601) protein is tRNA dimethylallyltransferase.